Consider the following 471-residue polypeptide: MADSDLLVTISGAALSLLFFENVRSVGNQMGFLLGEALEFIVKTYTDSDNQVETVKIHINVEAIVTCPLADLLHDSTNHINKEKLKDFVRDKSKQVIGWFCFRRNTTNLTLTLKDKLLHKQFASHFSGVNGCKEDFFLTCLLNASTSETSGTHKFRHVFLRHNKRGMFEPISLKINNLGDDASRHDGSDYKPTPVRKSTRTPDSFTKLIESLNLDVARIDGLDSAMLIQKAAEHHLMSLIPKVCESDLEVAELEKQVHELKIKIATQQLAKRLKINGENCDRISKASKDNCFSEKIDSSKKNEVRIGDDACLQREHIPSCTQSVGPNNRTVCRNTAACIAKSAEKSRRAGRSNLQESGNQQQETQNFFTNSRRSIPEIATESICQEGSEISMGRGRGSGRGSHEFTPGMKKIRRTPGTSHMHSSRERSTTPPEQDFSDAECPISSPVLRSYSQVTKKTNLDKCNSMAPLDI.

An MPN domain is found at 7–161 (LVTISGAALS…THKFRHVFLR (155 aa)). Positions 245–272 (ESDLEVAELEKQVHELKIKIATQQLAKR) form a coiled coil. Positions 343 to 445 (AEKSRRAGRS…FSDAECPISS (103 aa)) are disordered. Positions 359–370 (NQQQETQNFFTN) are enriched in low complexity.

Belongs to the FAM175 family. Abro1 subfamily. As to quaternary structure, component of the BRISC complex, at least composed of FAM175B/ABRO1, BRCC3/BRCC36, BABAM2 and BABAM1/NBA1. Within the complex, interacts directly with BRCC3/BRCC36. The heterodimer with BRCC3/BRCC36 assembles into a heterotetramer. The BRISC complex binds polyubiquitin.

It localises to the cytoplasm. Its subcellular location is the nucleus. It is found in the cytoskeleton. The protein resides in the spindle pole. In terms of biological role, component of the BRISC complex that specifically cleaves 'Lys-63'-linked polyubiquitin, leaving the last ubiquitin chain attached to its substrates. Does not have activity by itself, but the catalytic subunit BRCC3/BRCC36 needs to be associated into a heterotetramer with FAM175B for minimal in vitro activity. May act as a central scaffold protein that assembles the various components of the BRISC complex and retains them in the cytoplasm. Plays a role in regulating the onset of apoptosis via its role in modulating 'Lys-63'-linked ubiquitination of target proteins. Required for normal mitotic spindle assembly and microtubule attachment to kinetochores via its role in deubiquitinating numa1. The sequence is that of BRISC complex subunit FAM175B from Camponotus floridanus (Florida carpenter ant).